Consider the following 233-residue polypeptide: ATP synthase subunit C lysine N-methyltransferase (233 aa).

At Met-1 the chain carries N-acetylmethionine. The helical transmembrane segment at 38-58 (FLLTGLVGGTLVAVYAVATPF) threads the bilayer. Positions 56 to 90 (TPFVTPALRKVCLPFVPATTKQIENVVKMLRCRRG) are required for mitochondrial location.

Belongs to the ANT/ATPSC lysine N-methyltransferase family. In terms of tissue distribution, ubiquitously expressed.

The protein resides in the mitochondrion membrane. The enzyme catalyses L-lysyl-[protein] + 3 S-adenosyl-L-methionine = N(6),N(6),N(6)-trimethyl-L-lysyl-[protein] + 3 S-adenosyl-L-homocysteine + 3 H(+). Mitochondrial protein-lysine N-methyltransferase that trimethylates ATP synthase subunit C, ATP5MC1 and ATP5MC2. Trimethylation is required for proper incorporation of the C subunit into the ATP synthase complex and mitochondrial respiration. Promotes chronic pain. Involved in persistent inflammatory and neuropathic pain: methyltransferase activity in the mitochondria of sensory neurons promotes chronic pain via a pathway that depends on the production of reactive oxygen species (ROS) and on the engagement of spinal cord microglia. The sequence is that of ATP synthase subunit C lysine N-methyltransferase from Homo sapiens (Human).